Reading from the N-terminus, the 611-residue chain is Zinc metalloproteinase-disintegrin-like ohanin (611 aa).

Positions 1–20 are cleaved as a signal peptide; it reads MIQVLLVTICLVVFPYQGSS. A propeptide spanning residues 21 to 187 is cleaved from the precursor; it reads IILESGKVND…WESDEPIEKI (167 aa). The Peptidase M12B domain occupies 198–393; the sequence is KYLELYIVAD…DTPQCLINKP (196 aa). Residues N217 and N260 are each glycosylated (N-linked (GlcNAc...) asparagine). Cystine bridges form between C307–C388, C347–C372, and C349–C354. H332 lines the Zn(2+) pocket. E333 is an active-site residue. Zn(2+) is bound by residues H336 and H342. A glycan (N-linked (GlcNAc...) asparagine) is linked at N395. The Disintegrin domain occupies 401 to 487; sequence NAVCGNYVEE…ECPMDRFHKN (87 aa). 14 cysteine pairs are disulfide-bonded: C404–C433, C415–C428, C417–C423, C427–C450, C441–C447, C446–C472, C459–C479, C466–C498, C491–C503, C510–C560, C525–C578, C538–C548, C555–C603, and C597–C608. The D/ECD-tripeptide signature appears at 465 to 467; the sequence is ECD. N528 is a glycosylation site (N-linked (GlcNAc...) asparagine).

It belongs to the venom metalloproteinase (M12B) family. P-III subfamily. P-IIIa sub-subfamily. As to quaternary structure, monomer. Requires Zn(2+) as cofactor. Expressed by the venom gland.

The protein localises to the secreted. Its activity is regulated as follows. Inhibited by EDTA, but not by PMSF. Its function is as follows. Snake venom zinc metalloproteinase that has hemorrhagic activity. Inhibits ADP-, TMVA- and stejnulxin-induced platelet aggregation in a dose-dependent manner (on washed platelet, but not on platelet rich plasm). Also specifically degrades alpha-chain of fibrinogen (FGA). The polypeptide is Zinc metalloproteinase-disintegrin-like ohanin (Ophiophagus hannah (King cobra)).